The sequence spans 429 residues: Kynureninase (429 aa).

Residues Leu109, Thr110, 137-140 (FPSD), Asp222, His225, and Tyr247 each bind pyridoxal 5'-phosphate. N6-(pyridoxal phosphate)lysine is present on Lys248. Pyridoxal 5'-phosphate is bound by residues Trp278 and Asn306.

It belongs to the kynureninase family. As to quaternary structure, homodimer. Pyridoxal 5'-phosphate is required as a cofactor.

It catalyses the reaction L-kynurenine + H2O = anthranilate + L-alanine + H(+). The enzyme catalyses 3-hydroxy-L-kynurenine + H2O = 3-hydroxyanthranilate + L-alanine + H(+). The protein operates within amino-acid degradation; L-kynurenine degradation; L-alanine and anthranilate from L-kynurenine: step 1/1. Its pathway is cofactor biosynthesis; NAD(+) biosynthesis; quinolinate from L-kynurenine: step 2/3. In terms of biological role, catalyzes the cleavage of L-kynurenine (L-Kyn) and L-3-hydroxykynurenine (L-3OHKyn) into anthranilic acid (AA) and 3-hydroxyanthranilic acid (3-OHAA), respectively. The sequence is that of Kynureninase from Salinispora tropica (strain ATCC BAA-916 / DSM 44818 / JCM 13857 / NBRC 105044 / CNB-440).